A 714-amino-acid polypeptide reads, in one-letter code: Rho-GTPase-activating protein RGD2 (714 aa).

The 440-residue stretch at 2–441 (LSFCDYFWSE…LENDIDPTAD (440 aa)) folds into the F-BAR domain. A DEP domain is found at 218–298 (PKTDYKLPLI…WKNTAYMFAN (81 aa)). Residues 475–704 (VDLETRCRLD…DLLTHKKQIF (230 aa)) enclose the Rho-GAP domain.

Interacts with CDC42 and RHO5.

Functionally, acts in signal transduction. Activates CDC42 and RHO5. The protein is Rho-GTPase-activating protein RGD2 (RGD2) of Saccharomyces cerevisiae (strain ATCC 204508 / S288c) (Baker's yeast).